The chain runs to 245 residues: MNAPQDRTDDGGVPVPVTPAGATGGAPAELPPSSPAGRGMFGDQGTGDVSGYGGLVRPQRSIEAASRPYGGYFDEVADALEEAYPAFGEAIEKVVVDRGELTLHIRPERIAEVCQVLRDDLALRFELCSSVSGVDYLGADARRLHAVYQLTSMTYRRQIRLEAAVSVEDPHLPSVTGVYPTADWQEREAYDMFGIVFDGHPGLTRILMPDDWEGHPQRKDYPLGGVPVEYKGAEIPPPDRRRSYQ.

Positions M1–D10 are enriched in basic and acidic residues. Disordered stretches follow at residues M1–G54 and Q217–Q245. Low complexity predominate over residues G11 to A28. Gly residues predominate over residues G39 to G54.

The protein belongs to the complex I 30 kDa subunit family. As to quaternary structure, NDH-1 is composed of 14 different subunits. Subunits NuoB, C, D, E, F, and G constitute the peripheral sector of the complex.

Its subcellular location is the cell membrane. It carries out the reaction a quinone + NADH + 5 H(+)(in) = a quinol + NAD(+) + 4 H(+)(out). Its function is as follows. NDH-1 shuttles electrons from NADH, via FMN and iron-sulfur (Fe-S) centers, to quinones in the respiratory chain. The immediate electron acceptor for the enzyme in this species is believed to be a menaquinone. Couples the redox reaction to proton translocation (for every two electrons transferred, four hydrogen ions are translocated across the cytoplasmic membrane), and thus conserves the redox energy in a proton gradient. The protein is NADH-quinone oxidoreductase subunit C of Salinispora arenicola (strain CNS-205).